The primary structure comprises 65 residues: uncharacterized protein (65 aa).

This is an uncharacterized protein from Acheta domesticus (House cricket).